The following is a 349-amino-acid chain: Protein RecA (349 aa).

Residue 65–72 coordinates ATP; the sequence is GPESSGKT.

It belongs to the RecA family.

The protein localises to the cytoplasm. Functionally, can catalyze the hydrolysis of ATP in the presence of single-stranded DNA, the ATP-dependent uptake of single-stranded DNA by duplex DNA, and the ATP-dependent hybridization of homologous single-stranded DNAs. It interacts with LexA causing its activation and leading to its autocatalytic cleavage. In Azotobacter vinelandii (strain DJ / ATCC BAA-1303), this protein is Protein RecA.